The primary structure comprises 141 residues: Hemoglobin subunit alpha (141 aa).

The region spanning V1–R141 is the Globin domain. S3 carries the phosphoserine modification. An N6-succinyllysine mark is found at K7 and K11. K16 bears the N6-acetyllysine; alternate mark. K16 bears the N6-succinyllysine; alternate mark. Y24 is modified (phosphotyrosine). S35 carries the phosphoserine modification. Position 40 is an N6-succinyllysine (K40). Position 49 is a phosphoserine (S49). H58 is a binding site for O2. Residue H87 participates in heme b binding. S102 bears the Phosphoserine mark. A Phosphothreonine modification is found at T108. The residue at position 124 (S124) is a Phosphoserine. 2 positions are modified to phosphothreonine: T134 and T137. At S138 the chain carries Phosphoserine.

Belongs to the globin family. Heterotetramer of two alpha chains and two beta chains. Red blood cells.

Involved in oxygen transport from the lung to the various peripheral tissues. Functionally, hemopressin acts as an antagonist peptide of the cannabinoid receptor CNR1. Hemopressin-binding efficiently blocks cannabinoid receptor CNR1 and subsequent signaling. The sequence is that of Hemoglobin subunit alpha (HBA) from Hippopotamus amphibius (Hippopotamus).